Consider the following 201-residue polypeptide: Recombination protein RecR (201 aa).

A C4-type zinc finger spans residues 57–72 (CSDCRTFTEQDVCAIC). Residues 81 to 176 (GQICVVESPA…MASRIAHGVP (96 aa)) enclose the Toprim domain.

The protein belongs to the RecR family.

May play a role in DNA repair. It seems to be involved in an RecBC-independent recombinational process of DNA repair. It may act with RecF and RecO. This chain is Recombination protein RecR, found in Pectobacterium carotovorum subsp. carotovorum (strain PC1).